The chain runs to 329 residues: Secretory carrier-associated membrane protein 2 (329 aa).

Residues 1–74 are disordered; it reads MSAFDTNPFA…PSVEPAQPTP (74 aa). Residues 1–153 lie on the Cytoplasmic side of the membrane; the sequence is MSAFDTNPFA…DYQRICKMLY (153 aa). Polar residues-rich tracts occupy residues 19–31 and 40–51; these read QDPS…NAPQ and FSETNAATTVPA. The chain crosses the membrane as a helical span at residues 154 to 174; the sequence is YLWMLHSVTLFLNLLACLAWF. The Lumenal portion of the chain corresponds to 175–181; the sequence is TSDAANG. The helical transmembrane segment at 182-202 threads the bilayer; the sequence is TAFGLSILWFLIFTPCAFLCW. Residues 203–218 are Cytoplasmic-facing; that stretch reads YRPIYKAFRSDNSFSF. The tract at residues 203–218 is interaction with SLC9A7; it reads YRPIYKAFRSDNSFSF. The helical transmembrane segment at 219–239 threads the bilayer; the sequence is FVFFFVFFCQIGIYFIQLIGL. Residues 240–262 are Lumenal-facing; that stretch reads PNLGTSGWLAALSTMKNGPLAVT. Residues 263–283 form a helical membrane-spanning segment; sequence IIMMVVAGFFTLCAGLSLFLL. The Cytoplasmic segment spans residues 284–329; that stretch reads QRVHAFYRRTGASFQQAQEEFSQGIFSSRTFRGAASSAARGAFQGN. 2 positions are modified to phosphoserine: S319 and S320.

Belongs to the SCAMP family. In terms of assembly, interacts with SLC6A4 and SLC9A7. Interacts with SLC9A5; this interaction regulates SLC9A5 cell-surface targeting and SLC9A5 activity.

Its subcellular location is the golgi apparatus. The protein localises to the trans-Golgi network membrane. The protein resides in the recycling endosome membrane. Functionally, functions in post-Golgi recycling pathways. Acts as a recycling carrier to the cell surface. The chain is Secretory carrier-associated membrane protein 2 (Scamp2) from Mus musculus (Mouse).